The primary structure comprises 387 residues: 3-ketoacyl-CoA thiolase (387 aa).

Catalysis depends on Cys-91, which acts as the Acyl-thioester intermediate. Residues His-343 and Cys-373 each act as proton acceptor in the active site.

Belongs to the thiolase-like superfamily. Thiolase family. As to quaternary structure, heterotetramer of two alpha chains (FadB) and two beta chains (FadA).

Its subcellular location is the cytoplasm. The catalysed reaction is an acyl-CoA + acetyl-CoA = a 3-oxoacyl-CoA + CoA. It functions in the pathway lipid metabolism; fatty acid beta-oxidation. Functionally, catalyzes the final step of fatty acid oxidation in which acetyl-CoA is released and the CoA ester of a fatty acid two carbons shorter is formed. Involved in the aerobic and anaerobic degradation of long-chain fatty acids. This is 3-ketoacyl-CoA thiolase from Escherichia coli O6:H1 (strain CFT073 / ATCC 700928 / UPEC).